A 269-amino-acid chain; its full sequence is Ribosomal RNA small subunit methyltransferase J (269 aa).

S-adenosyl-L-methionine is bound by residues 124–125 (ER) and aspartate 188.

It belongs to the methyltransferase superfamily. RsmJ family.

The protein resides in the cytoplasm. The catalysed reaction is guanosine(1516) in 16S rRNA + S-adenosyl-L-methionine = N(2)-methylguanosine(1516) in 16S rRNA + S-adenosyl-L-homocysteine + H(+). Specifically methylates the guanosine in position 1516 of 16S rRNA. This Saccharophagus degradans (strain 2-40 / ATCC 43961 / DSM 17024) protein is Ribosomal RNA small subunit methyltransferase J.